A 397-amino-acid chain; its full sequence is uncharacterized protein (397 aa).

The next 4 helical transmembrane spans lie at 22 to 42 (ILTM…VAVG), 270 to 290 (IMTT…GIGV), 327 to 347 (VVLT…GAAL), and 362 to 382 (VVCG…MLPA).

Belongs to the ABC-4 integral membrane protein family. As to quaternary structure, part of a complex composed of YknX, YknY and YknZ. The complex interacts with YknW.

The protein localises to the cell membrane. The protein resides in the membrane raft. Part of an unusual four-component transporter, which is required for protection against the killing factor SdpC (sporulation-delaying protein). This is an uncharacterized protein from Bacillus subtilis (strain 168).